We begin with the raw amino-acid sequence, 384 residues long: Probable L-aspartate decarboxylase (384 aa).

Lys233 is modified (N6-(pyridoxal phosphate)lysine).

Belongs to the group II decarboxylase family. MfnA subfamily. Pyridoxal 5'-phosphate serves as cofactor.

The catalysed reaction is L-aspartate + H(+) = beta-alanine + CO2. It participates in cofactor biosynthesis; coenzyme A biosynthesis. Catalyzes the decarboxylation of L-aspartate to produce beta-alanine. This Pyrococcus abyssi (strain GE5 / Orsay) protein is Probable L-aspartate decarboxylase.